An 84-amino-acid polypeptide reads, in one-letter code: Small ribosomal subunit protein uS17 (84 aa).

Belongs to the universal ribosomal protein uS17 family. In terms of assembly, part of the 30S ribosomal subunit.

Functionally, one of the primary rRNA binding proteins, it binds specifically to the 5'-end of 16S ribosomal RNA. The polypeptide is Small ribosomal subunit protein uS17 (Klebsiella pneumoniae subsp. pneumoniae (strain ATCC 700721 / MGH 78578)).